The following is a 210-amino-acid chain: Thymidylate kinase (210 aa).

10 to 17 (GPEGAGKS) is a binding site for ATP.

It belongs to the thymidylate kinase family.

The enzyme catalyses dTMP + ATP = dTDP + ADP. Phosphorylation of dTMP to form dTDP in both de novo and salvage pathways of dTTP synthesis. This Pseudomonas entomophila (strain L48) protein is Thymidylate kinase.